Consider the following 333-residue polypeptide: Eukaryotic translation initiation factor 2 subunit 2 (333 aa).

Disordered regions lie at residues 1-120 (MSGD…LDIM) and 139-165 (ILEK…QTGP). An N-acetylserine modification is found at S2. The residue at position 2 (S2) is a Phosphoserine. S13 is subject to Phosphoserine; by PKC; in vitro. A compositionally biased stretch (basic residues) spans 13-22 (SKKKKKKKKP). T36 is modified (phosphothreonine). Positions 40–51 (ETKEVEPEPTED) are enriched in basic and acidic residues. S67 is subject to Phosphoserine; by CK2. Residues 96–105 (EGVKDLKIEN) show a composition bias toward basic and acidic residues. K102 participates in a covalent cross-link: Glycyl lysine isopeptide (Lys-Gly) (interchain with G-Cter in SUMO2). Acidic residues-rich tracts occupy residues 106-118 (DVQE…DDLD) and 139-149 (ILEKDEALEDE). S158 carries the post-translational modification Phosphoserine. S218 is modified (phosphoserine; by PKA; in vitro). N6-acetyllysine occurs at positions 265 and 293. The C4-type zinc-finger motif lies at 281-305 (CHTCRSPDTILQKDTRLYFLQCETC).

The protein belongs to the eIF-2-beta/eIF-5 family. As to quaternary structure, eukaryotic translation initiation factor 2 eIF2 is a heterotrimeric complex composed of an alpha (EIF2S1), a beta (EIF2S2) and a gamma (EIF2S3) chain. eIF2 is member of the 43S pre-initiation complex (43S PIC). eIF2 forms a complex with at least CELF1/CUGBP1, CALR, CALR3, EIF2S1, EIF2S2, HSP90B1 and HSPA5. Interacts with BZW2/5MP1. Interacts with EIF5. The N-terminus is blocked.

The protein resides in the cytoplasm. It localises to the cytosol. Component of the eIF2 complex that functions in the early steps of protein synthesis by forming a ternary complex with GTP and initiator tRNA. This complex binds to a 40S ribosomal subunit, followed by mRNA binding to form the 43S pre-initiation complex (43S PIC). Junction of the 60S ribosomal subunit to form the 80S initiation complex is preceded by hydrolysis of the GTP bound to eIF2 and release of an eIF2-GDP binary complex. In order for eIF2 to recycle and catalyze another round of initiation, the GDP bound to eIF2 must exchange with GTP by way of a reaction catalyzed by eIF2B. This Oryctolagus cuniculus (Rabbit) protein is Eukaryotic translation initiation factor 2 subunit 2 (EIF2S2).